A 133-amino-acid polypeptide reads, in one-letter code: Protein msa (133 aa).

A run of 4 helical transmembrane segments spans residues tyrosine 3 to leucine 23, isoleucine 27 to phenylalanine 47, tyrosine 55 to methionine 75, and phenylalanine 103 to tyrosine 123.

The protein localises to the cell membrane. In terms of biological role, accessory element involved in the expression of sarA and several virulence factors. Modulates SarA production and/or function in a strain-dependent manner. Affects the transcription of the accessory gene regulator (agr) and genes encoding virulence factors including alpha toxin (hla) and protein A (spa). The polypeptide is Protein msa (msa) (Staphylococcus aureus (strain USA300)).